We begin with the raw amino-acid sequence, 159 residues long: Cyclic pyranopterin monophosphate synthase (159 aa).

Substrate-binding positions include 75 to 77 (LCH) and 113 to 114 (ME). The active site involves D128.

It belongs to the MoaC family. As to quaternary structure, homohexamer; trimer of dimers.

It carries out the reaction (8S)-3',8-cyclo-7,8-dihydroguanosine 5'-triphosphate = cyclic pyranopterin phosphate + diphosphate. It participates in cofactor biosynthesis; molybdopterin biosynthesis. Functionally, catalyzes the conversion of (8S)-3',8-cyclo-7,8-dihydroguanosine 5'-triphosphate to cyclic pyranopterin monophosphate (cPMP). This Cereibacter sphaeroides (strain ATCC 17023 / DSM 158 / JCM 6121 / CCUG 31486 / LMG 2827 / NBRC 12203 / NCIMB 8253 / ATH 2.4.1.) (Rhodobacter sphaeroides) protein is Cyclic pyranopterin monophosphate synthase.